The sequence spans 447 residues: Na(+)-translocating NADH-quinone reductase subunit A (447 aa).

Belongs to the NqrA family. As to quaternary structure, composed of six subunits; NqrA, NqrB, NqrC, NqrD, NqrE and NqrF.

It carries out the reaction a ubiquinone + n Na(+)(in) + NADH + H(+) = a ubiquinol + n Na(+)(out) + NAD(+). Functionally, NQR complex catalyzes the reduction of ubiquinone-1 to ubiquinol by two successive reactions, coupled with the transport of Na(+) ions from the cytoplasm to the periplasm. NqrA to NqrE are probably involved in the second step, the conversion of ubisemiquinone to ubiquinol. The polypeptide is Na(+)-translocating NADH-quinone reductase subunit A (Haemophilus influenzae (strain PittGG)).